The following is a 113-amino-acid chain: uncharacterized protein (113 aa).

The tract at residues 66-85 is disordered; it reads WSTPTTSSNTQNTQSSSDSY. Over residues 67–85 the composition is skewed to low complexity; it reads STPTTSSNTQNTQSSSDSY.

This is an uncharacterized protein from Escherichia coli (Bacteriophage T4).